The following is a 158-amino-acid chain: Vasotocin-neurophysin VT 2 (158 aa).

Positions 1-19 (MPHSTLLLCVIGLLAFSSA) are cleaved as a signal peptide. Cys20 and Cys25 are joined by a disulfide. The residue at position 28 (Gly28) is a Glycine amide. 7 disulfide bridges follow: Cys41/Cys85, Cys44/Cys58, Cys52/Cys75, Cys59/Cys65, Cys92/Cys105, Cys99/Cys117, and Cys106/Cys111.

Belongs to the vasopressin/oxytocin family. Post-translationally, seven disulfide bonds are present in neurophysin.

The protein resides in the secreted. Its function is as follows. Vasotocin is an antidiuretic hormone. This Oncorhynchus keta (Chum salmon) protein is Vasotocin-neurophysin VT 2.